Here is a 265-residue protein sequence, read N- to C-terminus: MKIAIAGASGRMGRMLIEAVLNDADAQLVGALDRAGSPSLGQDAGAFLGKDTGVKLTDDIDAVFAQADYLIDFTRPEGTLAHVEAALRHDVKLVIGTTGFTAEQKAVLHAAAEKVAIVFAANMSVGVNVTLKLLEFAAKHFSHGYDIEIIEAHHRHKVDAPSGTALMMGEAVAGALGRSLDDCAVYGRHGVTGERDPSTIGFAAVRGGDIVGDHTVLFAGIGERIEITHKSSSRVSYAQGALRAVRFLSARDTGLFDMQDVLGLR.

Residues 7–12 and Asp33 each bind NAD(+); that span reads GASGRM. Position 34 (Arg34) interacts with NADP(+). NAD(+) is bound by residues 96–98 and 120–123; these read GTT and AANM. His153 serves as the catalytic Proton donor/acceptor. His154 contacts (S)-2,3,4,5-tetrahydrodipicolinate. Catalysis depends on Lys157, which acts as the Proton donor. (S)-2,3,4,5-tetrahydrodipicolinate is bound at residue 163–164; it reads GT.

This sequence belongs to the DapB family.

The protein resides in the cytoplasm. The catalysed reaction is (S)-2,3,4,5-tetrahydrodipicolinate + NAD(+) + H2O = (2S,4S)-4-hydroxy-2,3,4,5-tetrahydrodipicolinate + NADH + H(+). It catalyses the reaction (S)-2,3,4,5-tetrahydrodipicolinate + NADP(+) + H2O = (2S,4S)-4-hydroxy-2,3,4,5-tetrahydrodipicolinate + NADPH + H(+). Its pathway is amino-acid biosynthesis; L-lysine biosynthesis via DAP pathway; (S)-tetrahydrodipicolinate from L-aspartate: step 4/4. In terms of biological role, catalyzes the conversion of 4-hydroxy-tetrahydrodipicolinate (HTPA) to tetrahydrodipicolinate. The protein is 4-hydroxy-tetrahydrodipicolinate reductase of Burkholderia multivorans (strain ATCC 17616 / 249).